The sequence spans 256 residues: Thiazole synthase (256 aa).

Lys-96 acts as the Schiff-base intermediate with DXP in catalysis. Residues Gly-157, Ala-183–Gly-184, and Asn-205–Thr-206 contribute to the 1-deoxy-D-xylulose 5-phosphate site.

Belongs to the ThiG family. As to quaternary structure, homotetramer. Forms heterodimers with either ThiH or ThiS.

Its subcellular location is the cytoplasm. It carries out the reaction [ThiS sulfur-carrier protein]-C-terminal-Gly-aminoethanethioate + 2-iminoacetate + 1-deoxy-D-xylulose 5-phosphate = [ThiS sulfur-carrier protein]-C-terminal Gly-Gly + 2-[(2R,5Z)-2-carboxy-4-methylthiazol-5(2H)-ylidene]ethyl phosphate + 2 H2O + H(+). It functions in the pathway cofactor biosynthesis; thiamine diphosphate biosynthesis. In terms of biological role, catalyzes the rearrangement of 1-deoxy-D-xylulose 5-phosphate (DXP) to produce the thiazole phosphate moiety of thiamine. Sulfur is provided by the thiocarboxylate moiety of the carrier protein ThiS. In vitro, sulfur can be provided by H(2)S. This Bacillus cereus (strain AH187) protein is Thiazole synthase.